A 130-amino-acid chain; its full sequence is Small ribosomal subunit protein uS11c (130 aa).

The protein belongs to the universal ribosomal protein uS11 family. As to quaternary structure, part of the 30S ribosomal subunit.

The protein localises to the plastid. The protein resides in the chloroplast. This Physcomitrium patens (Spreading-leaved earth moss) protein is Small ribosomal subunit protein uS11c.